The following is a 347-amino-acid chain: tRNA N6-adenosine threonylcarbamoyltransferase (347 aa).

Fe cation-binding residues include histidine 113 and histidine 117. Substrate contacts are provided by residues 136 to 140 (IVSGG), aspartate 170, glycine 183, aspartate 187, and asparagine 282. Aspartate 310 contributes to the Fe cation binding site.

Belongs to the KAE1 / TsaD family. It depends on Fe(2+) as a cofactor.

It is found in the cytoplasm. The catalysed reaction is L-threonylcarbamoyladenylate + adenosine(37) in tRNA = N(6)-L-threonylcarbamoyladenosine(37) in tRNA + AMP + H(+). Its function is as follows. Required for the formation of a threonylcarbamoyl group on adenosine at position 37 (t(6)A37) in tRNAs that read codons beginning with adenine. Is involved in the transfer of the threonylcarbamoyl moiety of threonylcarbamoyl-AMP (TC-AMP) to the N6 group of A37, together with TsaE and TsaB. TsaD likely plays a direct catalytic role in this reaction. The polypeptide is tRNA N6-adenosine threonylcarbamoyltransferase (Bifidobacterium longum (strain NCC 2705)).